We begin with the raw amino-acid sequence, 156 residues long: Calglandulin (156 aa).

EF-hand domains are found at residues 8 to 43 (EQITEYKGIFEMFDEEGNGLVKTDDLESLMSLVGIN), 44 to 79 (PTKRDLANMAKDVDKDKKGTFNCDGFLALMGIYHEK), 82 to 117 (NQDEELRAAFKVFDKEHKGYIEWDTLKYVLMNAGEP), and 118 to 153 (LNEQEAELMMKEADKDGDGTIDYEEFVAMMTGESFK). Residues Asp-131, Asp-133, Asp-135, Thr-137, and Glu-142 each contribute to the Ca(2+) site.

It belongs to the calmodulin family. Calglandulin subfamily. In terms of tissue distribution, expressed by the venom gland.

It localises to the cytoplasm. Functionally, may be involved in the cellular control mechanism of the secretion of toxins from the gland into the venom. This is Calglandulin from Bothrops insularis (Golden lancehead).